Consider the following 100-residue polypeptide: Vesicle-associated membrane protein 8 (100 aa).

Methionine 1 is subject to N-acetylmethionine. Residues 1-75 lie on the Cytoplasmic side of the membrane; it reads MEEASEGGGN…ARKFWWKNVK (75 aa). Phosphoserine occurs at positions 5 and 18. Residues 12 to 72 form the v-SNARE coiled-coil homology domain; sequence RVRNLQSEVE…QKVARKFWWK (61 aa). 3 positions are modified to phosphothreonine: threonine 28, threonine 48, and threonine 54. Position 55 is a phosphoserine (serine 55). 2 (Microbial infection) N6-stearoyl lysine lipidation sites follow: lysine 64 and lysine 68. Residues 76–96 traverse the membrane as a helical; Anchor for type IV membrane protein segment; the sequence is MIVLICVIVFIIILFIVLFAT. Residues 97–100 are Vesicular-facing; that stretch reads GAFS.

It belongs to the synaptobrevin family. Forms a SNARE complex composed of VAMP8, SNAP29 and STX17 involved in fusion of autophagosome with lysosome. Found in a number of SNARE complexes with NAPA, SNAP23, SNAP25, STX1A, STX4, STX7, STX8 and VTI1B. Interacts with PICALM. SNARE complex formation and binding by PICALM are mutually exclusive processes for VAMP8. Interacts with SBF2/MTMR13. Interacts with RAB21 (in GTP-bound form) in response to starvation; the interaction probably regulates VAMP8 endolysosomal trafficking. Interacts with STX17; this interaction is increased in the absence of TMEM39A. Interacts with TRIM6. In terms of assembly, (Microbial infection) The interaction with STX17 is decreased in presence of SARS coronavirus-2/SARS-CoV-2 ORF3A protein. In terms of processing, (Microbial infection) Stearoylated By S.flexneri N-epsilon-fatty acyltransferase IcsB, thereby disrupting the host actin cytoskeleton. In terms of tissue distribution, platelets.

Its subcellular location is the lysosome membrane. The protein resides in the early endosome membrane. It is found in the late endosome membrane. The protein localises to the cell membrane. It localises to the zymogen granule membrane. In terms of biological role, SNAREs, soluble N-ethylmaleimide-sensitive factor-attachment protein receptors, are essential proteins for fusion of cellular membranes. SNAREs localized on opposing membranes assemble to form a trans-SNARE complex, an extended, parallel four alpha-helical bundle that drives membrane fusion. VAMP8 is a SNARE involved in autophagy through the direct control of autophagosome membrane fusion with the lysososome membrane via its interaction with the STX17-SNAP29 binary t-SNARE complex. Also required for dense-granule secretion in platelets. Also plays a role in regulated enzyme secretion in pancreatic acinar cells. Involved in the abscission of the midbody during cell division, which leads to completely separate daughter cells. Involved in the homotypic fusion of early and late endosomes. Also participates in the activation of type I interferon antiviral response through a TRIM6-dependent mechanism. The polypeptide is Vesicle-associated membrane protein 8 (Homo sapiens (Human)).